We begin with the raw amino-acid sequence, 475 residues long: Trifunctional enzyme subunit beta, mitochondrial (475 aa).

The transit peptide at 1-34 (MTTILTSTFRNLSTTSKWALRFSVRPLSCSSQVQ) directs the protein to the mitochondrion. K53 carries the N6-succinyllysine modification. The residue at position 73 (K73) is an N6-acetyllysine; alternate. At K73 the chain carries N6-succinyllysine; alternate. C139 serves as the catalytic Acyl-thioester intermediate. An intramembrane segment occupies 174–221 (IRHSRNMRKMMLDLNKAKTLAQRLSLLTKFRLNFLSPELPAVAEFSTN). K189 carries the post-translational modification N6-acetyllysine; alternate. K189 is subject to N6-succinyllysine; alternate. N6-succinyllysine is present on residues K191, K273, and K292. Position 294 is an N6-acetyllysine; alternate (K294). Residue K294 is modified to N6-succinyllysine; alternate. K299 carries the N6-acetyllysine modification. K333 bears the N6-acetyllysine; alternate mark. Residue K333 is modified to N6-succinyllysine; alternate. N6-acetyllysine occurs at positions 349 and 362. The Proton donor/acceptor role is filled by C459.

The protein belongs to the thiolase-like superfamily. Thiolase family. In terms of assembly, heterotetramer of 2 alpha/HADHA and 2 beta/HADHB subunits; forms the mitochondrial trifunctional enzyme. Also purified as higher order heterooligomers including a 4 alpha/HADHA and 4 beta/HADHB heterooligomer which physiological significance remains unclear. The mitochondrial trifunctional enzyme interacts with MTLN. Interacts with RSAD2/viperin.

It is found in the mitochondrion. Its subcellular location is the mitochondrion inner membrane. The protein localises to the mitochondrion outer membrane. It localises to the endoplasmic reticulum. The enzyme catalyses an acyl-CoA + acetyl-CoA = a 3-oxoacyl-CoA + CoA. It catalyses the reaction butanoyl-CoA + acetyl-CoA = 3-oxohexanoyl-CoA + CoA. The catalysed reaction is hexanoyl-CoA + acetyl-CoA = 3-oxooctanoyl-CoA + CoA. It carries out the reaction octanoyl-CoA + acetyl-CoA = 3-oxodecanoyl-CoA + CoA. The enzyme catalyses decanoyl-CoA + acetyl-CoA = 3-oxododecanoyl-CoA + CoA. It catalyses the reaction dodecanoyl-CoA + acetyl-CoA = 3-oxotetradecanoyl-CoA + CoA. The catalysed reaction is tetradecanoyl-CoA + acetyl-CoA = 3-oxohexadecanoyl-CoA + CoA. Its pathway is lipid metabolism; fatty acid beta-oxidation. Mitochondrial trifunctional enzyme catalyzes the last three of the four reactions of the mitochondrial beta-oxidation pathway. The mitochondrial beta-oxidation pathway is the major energy-producing process in tissues and is performed through four consecutive reactions breaking down fatty acids into acetyl-CoA. Among the enzymes involved in this pathway, the trifunctional enzyme exhibits specificity for long-chain fatty acids. Mitochondrial trifunctional enzyme is a heterotetrameric complex composed of two proteins, the trifunctional enzyme subunit alpha/HADHA carries the 2,3-enoyl-CoA hydratase and the 3-hydroxyacyl-CoA dehydrogenase activities, while the trifunctional enzyme subunit beta/HADHB described here bears the 3-ketoacyl-CoA thiolase activity. This is Trifunctional enzyme subunit beta, mitochondrial (Hadhb) from Rattus norvegicus (Rat).